The chain runs to 342 residues: S-adenosylmethionine:tRNA ribosyltransferase-isomerase (342 aa).

This sequence belongs to the QueA family. As to quaternary structure, monomer.

The protein localises to the cytoplasm. The enzyme catalyses 7-aminomethyl-7-carbaguanosine(34) in tRNA + S-adenosyl-L-methionine = epoxyqueuosine(34) in tRNA + adenine + L-methionine + 2 H(+). Its pathway is tRNA modification; tRNA-queuosine biosynthesis. Functionally, transfers and isomerizes the ribose moiety from AdoMet to the 7-aminomethyl group of 7-deazaguanine (preQ1-tRNA) to give epoxyqueuosine (oQ-tRNA). In Bacillus subtilis (strain 168), this protein is S-adenosylmethionine:tRNA ribosyltransferase-isomerase.